A 664-amino-acid chain; its full sequence is MDNKLEKMKELVEELNQYAYEYYVLDNPSISDKEYDLKYDELVILEKKTEVTLPYSPTQRVGDKILGEFSKYTHKGRLWSLDKAQNMEQLIEWHNRNLKVIEQYNSMSEDKLPELRYIVTKKFDGLTVNCTYDENGILIKSATRGTGIIGEDITAQIKTIKTVPLKIKNNHVIEVHGEAIMTKTAFEEYNKAAQVPLKNLRNGAAGALRNLDIKETARRNLSAFFYDVGYNEGPEFKSYREMMNFIKNMGLPQDKYIKECTNMEEVEKEIEYIESIRGELDYDIDGAVIVVDDIKTREILGYTIKFPKWAIAYKFEAKEITTKLLDVEWNVGRSGRVTPTALLEPVELGGVTVKRATLNNMDDIKRKNVKLGAKVLVRRSNDVIPEIMGVVEESLEESEEIQAPDRCPYCNSHLVQNGVHYYCENTLSCKPQMVKSIVHFASREAMNIAGFSEKTAEQLFEKLDIKSIADLYKIKKEELLTLEKFKDKKSQNLIDAIQNSKNCDLASFIYALGIPNVGKKTANDLVMKFKTLESIKNTTIEQLVEVPDVGEIVAKSIYDFFEDEKIISNIEELLNLGVKPYYEEERIDENPFMGKTIVVTGSLNNYSRGEIKDKLQSLGAKVSSSVSKNTDYVLVGEKPGSKYEKAIELGVKVINEEEFSNKIK.

Residues 32-36 (DKEYD) and 80-81 (SL) contribute to the NAD(+) site. The N6-AMP-lysine intermediate role is filled by K122. Residues R144, E178, and K314 each contribute to the NAD(+) site. 4 residues coordinate Zn(2+): C407, C410, C423, and C429. Residues 587–664 (IDENPFMGKT…NEEEFSNKIK (78 aa)) form the BRCT domain.

Belongs to the NAD-dependent DNA ligase family. LigA subfamily. It depends on Mg(2+) as a cofactor. Mn(2+) serves as cofactor.

The catalysed reaction is NAD(+) + (deoxyribonucleotide)n-3'-hydroxyl + 5'-phospho-(deoxyribonucleotide)m = (deoxyribonucleotide)n+m + AMP + beta-nicotinamide D-nucleotide.. DNA ligase that catalyzes the formation of phosphodiester linkages between 5'-phosphoryl and 3'-hydroxyl groups in double-stranded DNA using NAD as a coenzyme and as the energy source for the reaction. It is essential for DNA replication and repair of damaged DNA. This is DNA ligase from Clostridium botulinum (strain Kyoto / Type A2).